The following is a 195-amino-acid chain: MIASVRGEVLDIALDHVVIEAAGVGYKVMATPATLATLRRGSEARLITAMIVREDSQTLYGFADSDARDLFLTLLGVSGIGPSIALGALAMYDGPTLRQAIGDGDLTALTRIPKVGKKTAELLALTLRDKVGSSTSSGVAAAGGHGIRGPVVEALVGLGFAVKQAEEATDKVLANDPEATTSSALRAALSMLGKK.

Residues Met1 to Ala63 form a domain I region. The segment at Asp64–Gly138 is domain II. Residues Gly138–Ala142 are flexible linker. The tract at residues Gly143–Lys195 is domain III.

Belongs to the RuvA family. As to quaternary structure, homotetramer. Forms an RuvA(8)-RuvB(12)-Holliday junction (HJ) complex. HJ DNA is sandwiched between 2 RuvA tetramers; dsDNA enters through RuvA and exits via RuvB. An RuvB hexamer assembles on each DNA strand where it exits the tetramer. Each RuvB hexamer is contacted by two RuvA subunits (via domain III) on 2 adjacent RuvB subunits; this complex drives branch migration. In the full resolvosome a probable DNA-RuvA(4)-RuvB(12)-RuvC(2) complex forms which resolves the HJ.

It localises to the cytoplasm. Its function is as follows. The RuvA-RuvB-RuvC complex processes Holliday junction (HJ) DNA during genetic recombination and DNA repair, while the RuvA-RuvB complex plays an important role in the rescue of blocked DNA replication forks via replication fork reversal (RFR). RuvA specifically binds to HJ cruciform DNA, conferring on it an open structure. The RuvB hexamer acts as an ATP-dependent pump, pulling dsDNA into and through the RuvAB complex. HJ branch migration allows RuvC to scan DNA until it finds its consensus sequence, where it cleaves and resolves the cruciform DNA. The chain is Holliday junction branch migration complex subunit RuvA from Mycolicibacterium gilvum (strain PYR-GCK) (Mycobacterium gilvum (strain PYR-GCK)).